We begin with the raw amino-acid sequence, 377 residues long: MGTQGKVIKCKAAIAWKTGSPLCIEEIEVSPPKACEVRIQVIATCVCPTDINATDPKKKALFPVVLGHECAGIVESVGPGVTNFKPGDKVIPFFAPQCKRCKLCLSPLTNLCGKLRNFKYPTIDQELMEDRTSRFTCKGRSIYHFMGVSSFSQYTVVSEANLARVDDEANLERVCLIGCGFSSGYGAAINTAKVTPSSTCAVFGLGCVGLSAIIGCKIAGASRIIAIDINGEKFPKAKALGATDCLNPRELDKPVQDVITELTAGGVDYSLDCAGTAQTLKAAVDCTVLGWGSCTVVGAKVDKMTIPTVDVILGRSINGTFFGGWKSVDSVPNLVSDYKNKKFDLDLLVTHALPFESINDAIDLMKEGKSIRTILTF.

C47 serves as a coordination point for Zn(2+). Residue T49 participates in NAD(+) binding. Zn(2+) contacts are provided by H68, C98, C101, C104, C112, and C179. Residues 204 to 209 (GLGCVG), D228, K233, 297 to 299 (VGA), 320 to 322 (TFF), and R372 contribute to the NAD(+) site.

This sequence belongs to the zinc-containing alcohol dehydrogenase family. Class-II subfamily. In terms of assembly, dimer. The cofactor is Zn(2+). In terms of tissue distribution, liver specific.

The protein resides in the cytoplasm. It catalyses the reaction all-trans-retinol + NAD(+) = all-trans-retinal + NADH + H(+). The enzyme catalyses 9-cis-retinol + NAD(+) = 9-cis-retinal + NADH + H(+). It carries out the reaction 20-hydroxy-(5Z,8Z,11Z,14Z)-eicosatetraenoate + NAD(+) = 20-oxo-(5Z,8Z,11Z,14Z)-eicosatetraenoate + NADH + H(+). The catalysed reaction is 20-oxo-(5Z,8Z,11Z,14Z)-eicosatetraenoate + NAD(+) + H2O = (5Z,8Z,11Z,14Z)-eicosatetraenedioate + NADH + 2 H(+). It catalyses the reaction 1,4-benzoquinone + NADH + H(+) = hydroquinone + NAD(+). With respect to regulation, oxidation of 20-HETE is inhibited by low concentrations of N-heptylformamide. Oxidation of 20-HETE is a decreased by 55-65% by either all-trans-retinol or all-trans-retinoic acid. Strongly inhibited by omega-hydroxy fatty acids. Catalyzes the NAD-dependent oxidation of either all-trans-retinol or 9-cis-retinol. Also oxidizes long chain omega-hydroxy fatty acids, such as 20-HETE, producing both the intermediate aldehyde, 20-oxoarachidonate and the end product, a dicarboxylic acid, (5Z,8Z,11Z,14Z)-eicosatetraenedioate. Also catalyzes the reduction of benzoquinones. This Mus musculus (Mouse) protein is All-trans-retinol dehydrogenase [NAD(+)] ADH4.